An 897-amino-acid polypeptide reads, in one-letter code: F-BAR domain only protein 1 (897 aa).

Residues 1-276 are mediates membrane-binding; that stretch reads MIHFFHTLQG…VGFEEYLSSL (276 aa). Positions 2-248 constitute an F-BAR domain; it reads IHFFHTLQGE…NVENIGIENL (247 aa). The stretch at 134 to 154 forms a coiled coil; it reads LQKTREGYHSKCVELERLRKE. The tract at residues 475–537 is disordered; it reads VEDSGLDSPS…PNPAPSSQSN (63 aa). Polar residues predominate over residues 501–520; that stretch reads PSSQSQSKDSINAASQSRGG. In terms of domain architecture, MHD spans 630–894; that stretch reads SWPVAAAITE…RFATGKYMAG (265 aa).

Belongs to the FCHO family. In terms of assembly, may oligomerize and form homotetramer. Interacts with acvr1l/alk8; linking this receptor to clathrin-mediated endocytosis.

It localises to the membrane. It is found in the clathrin-coated pit. May function in an early step of clathrin-mediated endocytosis. May regulate Bmp signaling by regulating clathrin-mediated endocytosis of Bmp receptors. This Danio rerio (Zebrafish) protein is F-BAR domain only protein 1 (fcho1).